The sequence spans 685 residues: tRNA 5-methylaminomethyl-2-thiouridine biosynthesis bifunctional protein MnmC (685 aa).

Positions 1–272 (MTAEPNKPCQ…MAAILSSATQ (272 aa)) are tRNA (mnm(5)s(2)U34)-methyltransferase. Positions 278–685 (IGGGLASAHL…LRKLLKGKAL (408 aa)) are FAD-dependent cmnm(5)s(2)U34 oxidoreductase.

The protein in the N-terminal section; belongs to the methyltransferase superfamily. tRNA (mnm(5)s(2)U34)-methyltransferase family. This sequence in the C-terminal section; belongs to the DAO family. FAD serves as cofactor.

It localises to the cytoplasm. The catalysed reaction is 5-aminomethyl-2-thiouridine(34) in tRNA + S-adenosyl-L-methionine = 5-methylaminomethyl-2-thiouridine(34) in tRNA + S-adenosyl-L-homocysteine + H(+). Functionally, catalyzes the last two steps in the biosynthesis of 5-methylaminomethyl-2-thiouridine (mnm(5)s(2)U) at the wobble position (U34) in tRNA. Catalyzes the FAD-dependent demodification of cmnm(5)s(2)U34 to nm(5)s(2)U34, followed by the transfer of a methyl group from S-adenosyl-L-methionine to nm(5)s(2)U34, to form mnm(5)s(2)U34. This is tRNA 5-methylaminomethyl-2-thiouridine biosynthesis bifunctional protein MnmC from Shewanella baltica (strain OS185).